Consider the following 429-residue polypeptide: Chordin-like protein 2 (429 aa).

The first 25 residues, 1–25 (MVPEVRVLSSLLGLALLWFPLDSHA), serve as a signal peptide directing secretion. VWFC domains lie at 31 to 96 (MFCL…PKCV) and 109 to 175 (KSCQ…QACK). N-linked (GlcNAc...) asparagine glycosylation is present at asparagine 114. Serine 182 is modified (phosphoserine; by FAM20C). The disordered stretch occupies residues 182–224 (SDEEDSVQSLHGVRHPQDPCSSDAGRKRGPGTPAPTGLSAPLS). Positions 250-315 (KACVHGGKTY…VAGKCCKICP (66 aa)) constitute a VWFC 3 domain.

Interacts with GDF5. May interact with BMP2, BMP4, BMP5, BMP6, BMP7 and INHBA. In terms of processing, phosphorylated by FAM20C in the extracellular medium. In terms of tissue distribution, highly expressed in uterus. Moderately expressed in heart, liver, prostate, testis and ovary. Weakly expressed in skeletal muscle, kidney, spleen, small intestine and colon. Expressed in the secretory epithelial cells of uterine endometrium, fallopian tubes, endocervical glands, bladder and prostate, as well as the transitional epithelium of the urinary bladder, and in bone osteoblasts (at protein level). In normal cartilage, expression was confined in a few chondrocytes in the superficial zone as well as in the middle zone. In diseased cartilage coming from osteoarthritic patients, expression was limited to the middle zone of chondrocytes. Isoform 1 and isoform 2 are expressed in fetal cerebellum and heart, while only isoform 2 is detected in fetal spleen. Isoform 2 present in plasma.

Its subcellular location is the secreted. It is found in the cytoplasm. Functionally, may inhibit BMPs activity by blocking their interaction with their receptors. Has a negative regulator effect on the cartilage formation/regeneration from immature mesenchymal cells, by preventing or reducing the rate of matrix accumulation. Implicated in tumor angiogenesis. May play a role during myoblast and osteoblast differentiation, and maturation. The protein is Chordin-like protein 2 (CHRDL2) of Homo sapiens (Human).